We begin with the raw amino-acid sequence, 869 residues long: Phenylalanine--tRNA ligase beta subunit (869 aa).

One can recognise a tRNA-binding domain in the interval 41–162 (SQVTGPIVVG…QYGFSEAEYE (122 aa)). One can recognise a B5 domain in the interval 443–519 (PRAKAIHFKA…RLVGYDQIPI (77 aa)). Residues aspartate 497, aspartate 503, glutamate 506, and glutamate 507 each contribute to the Mg(2+) site. The region spanning 776 to 868 (STFPPVKQDL…EAAEIGAQLR (93 aa)) is the FDX-ACB domain.

This sequence belongs to the phenylalanyl-tRNA synthetase beta subunit family. Type 1 subfamily. Tetramer of two alpha and two beta subunits. Requires Mg(2+) as cofactor.

The protein localises to the cytoplasm. The enzyme catalyses tRNA(Phe) + L-phenylalanine + ATP = L-phenylalanyl-tRNA(Phe) + AMP + diphosphate + H(+). The chain is Phenylalanine--tRNA ligase beta subunit from Bifidobacterium longum (strain NCC 2705).